A 602-amino-acid chain; its full sequence is Sulfite reductase [NADPH] flavoprotein alpha-component (602 aa).

Residues 68 to 206 (ITIISASQTG…NYIQWSEELL (139 aa)) form the Flavodoxin-like domain. FMN contacts are provided by residues 74 to 79 (SQTGNA), 121 to 124 (STQG), and 157 to 166 (LGDVSYNLFC). One can recognise an FAD-binding FR-type domain in the interval 237–451 (YKPAVATVLL…VEEKSNFRLP (215 aa)). Residues Thr325, Lys359, 389–392 (RLYS), 407–409 (TVG), and 422–425 (GGSS) each bind FAD. Residues 522–523 (SR), 528–532 (KIYVQ), and Asp564 each bind NADP(+). Tyr602 contacts FAD.

The protein belongs to the NADPH-dependent sulphite reductase flavoprotein subunit CysJ family. In the N-terminal section; belongs to the flavodoxin family. This sequence in the C-terminal section; belongs to the flavoprotein pyridine nucleotide cytochrome reductase family. In terms of assembly, alpha(8)-beta(8). The alpha component is a flavoprotein, the beta component is a hemoprotein. It depends on FAD as a cofactor. Requires FMN as cofactor.

It catalyses the reaction hydrogen sulfide + 3 NADP(+) + 3 H2O = sulfite + 3 NADPH + 4 H(+). It functions in the pathway sulfur metabolism; hydrogen sulfide biosynthesis; hydrogen sulfide from sulfite (NADPH route): step 1/1. Component of the sulfite reductase complex that catalyzes the 6-electron reduction of sulfite to sulfide. This is one of several activities required for the biosynthesis of L-cysteine from sulfate. The flavoprotein component catalyzes the electron flow from NADPH -&gt; FAD -&gt; FMN to the hemoprotein component. The sequence is that of Sulfite reductase [NADPH] flavoprotein alpha-component from Buchnera aphidicola subsp. Schizaphis graminum (strain Sg).